A 177-amino-acid polypeptide reads, in one-letter code: ATP synthase subunit delta 1 (177 aa).

This sequence belongs to the ATPase delta chain family. As to quaternary structure, F-type ATPases have 2 components, F(1) - the catalytic core - and F(0) - the membrane proton channel. F(1) has five subunits: alpha(3), beta(3), gamma(1), delta(1), epsilon(1). F(0) has three main subunits: a(1), b(2) and c(10-14). The alpha and beta chains form an alternating ring which encloses part of the gamma chain. F(1) is attached to F(0) by a central stalk formed by the gamma and epsilon chains, while a peripheral stalk is formed by the delta and b chains.

It is found in the cell inner membrane. Functionally, f(1)F(0) ATP synthase produces ATP from ADP in the presence of a proton or sodium gradient. F-type ATPases consist of two structural domains, F(1) containing the extramembraneous catalytic core and F(0) containing the membrane proton channel, linked together by a central stalk and a peripheral stalk. During catalysis, ATP synthesis in the catalytic domain of F(1) is coupled via a rotary mechanism of the central stalk subunits to proton translocation. Its function is as follows. This protein is part of the stalk that links CF(0) to CF(1). It either transmits conformational changes from CF(0) to CF(1) or is implicated in proton conduction. This Photobacterium profundum (strain SS9) protein is ATP synthase subunit delta 1.